Here is a 254-residue protein sequence, read N- to C-terminus: Chymotrypsin-like serine proteinase (254 aa).

The N-terminal stretch at 1–18 (MNALLNILLCTLAATALA) is a signal peptide. Residues 19–23 (EISPN) constitute a propeptide, activation peptide. The Peptidase S1 domain occupies 24–254 (IVGGSNAAAG…SSFYNWVQTQ (231 aa)). C53 and C69 are oxidised to a cystine. Catalysis depends on charge relay system residues H68 and D117. 3 cysteine pairs are disulfide-bonded: C146/C218, C181/C199, and C208/C233. S212 (charge relay system) is an active-site residue.

Belongs to the peptidase S1 family. Monomer. Expressed specifically in the distal quarter of the intestine.

The protein localises to the secreted. The protein resides in the extracellular space. Activated by an autocatalytic mechanism. Its function is as follows. Specificity similar to chymotrypsin. The sequence is that of Chymotrypsin-like serine proteinase from Haliotis rufescens (California red abalone).